A 274-amino-acid polypeptide reads, in one-letter code: Nitrogenase iron protein (274 aa).

8-15 (GKGGIGKS) is an ATP binding site. Cys-94 contributes to the [4Fe-4S] cluster binding site. An ADP-ribosylarginine; by dinitrogenase reductase ADP-ribosyltransferase modification is found at Arg-97. Residue Cys-131 coordinates [4Fe-4S] cluster.

It belongs to the NifH/BchL/ChlL family. In terms of assembly, homodimer. [4Fe-4S] cluster is required as a cofactor. The reversible ADP-ribosylation of Arg-97 inactivates the nitrogenase reductase and regulates nitrogenase activity.

The enzyme catalyses N2 + 8 reduced [2Fe-2S]-[ferredoxin] + 16 ATP + 16 H2O = H2 + 8 oxidized [2Fe-2S]-[ferredoxin] + 2 NH4(+) + 16 ADP + 16 phosphate + 6 H(+). Its function is as follows. The key enzymatic reactions in nitrogen fixation are catalyzed by the nitrogenase complex, which has 2 components: the iron protein and the molybdenum-iron protein. This chain is Nitrogenase iron protein, found in Chlorobium phaeobacteroides (strain BS1).